We begin with the raw amino-acid sequence, 152 residues long: Flagellar assembly factor FliW (152 aa).

It belongs to the FliW family. In terms of assembly, interacts with translational regulator CsrA and flagellin(s).

Its subcellular location is the cytoplasm. Its function is as follows. Acts as an anti-CsrA protein, binds CsrA and prevents it from repressing translation of its target genes, one of which is flagellin. Binds to flagellin and participates in the assembly of the flagellum. The chain is Flagellar assembly factor FliW from Caldicellulosiruptor bescii (strain ATCC BAA-1888 / DSM 6725 / KCTC 15123 / Z-1320) (Anaerocellum thermophilum).